We begin with the raw amino-acid sequence, 371 residues long: Neuropeptide Y receptor type 6 (371 aa).

Topologically, residues 1 to 31 (MEVSLNDPASNKTSAKSNSSAFFYFESCQSP) are extracellular. 2 N-linked (GlcNAc...) asparagine glycosylation sites follow: Asn11 and Asn18. A helical transmembrane segment spans residues 32–52 (SLALLLLLIAYTVVLIMGICG). Topologically, residues 53–72 (NLSLITIIFKKQREAQNVTN) are cytoplasmic. Residues 73-93 (ILIANLSLSDILVCVMCIPFT) traverse the membrane as a helical segment. The Extracellular portion of the chain corresponds to 94–111 (AIYTLMDRWIFGNTMCKL). The cysteines at positions 109 and 196 are disulfide-linked. A helical transmembrane segment spans residues 112-132 (TSYVQSVSISVSIFSLVLIAI). The Cytoplasmic portion of the chain corresponds to 133–150 (ERYQLIVNPRGWKPSASH). Residues 151–171 (AYWGIMLIWLFSLLLSIPLLL) traverse the membrane as a helical segment. At 172-213 (SYHLTDEPFRNLSLPTDLYSHHVVCVEHWPSKTNQLLYSTSL) the chain is on the extracellular side. A glycan (N-linked (GlcNAc...) asparagine) is linked at Asn182. Residues 214 to 234 (IMLQYFVPLGFMFICYLKIVI) traverse the membrane as a helical segment. The Cytoplasmic portion of the chain corresponds to 235-263 (CLHKRNSKIDRRRENESRLTENKRINTML). Residues 264-284 (ISIVVTFAACWLPLNTFNVIF) traverse the membrane as a helical segment. The Extracellular segment spans residues 285–297 (DWYHEVLMSCHHD). A helical membrane pass occupies residues 298–318 (LVFAICHLVAMVSTCINPLFY). At 319–371 (GFLNRNFQKDLVVLIHHCLCFALRERYENIAISTLHTDESKGSLRVAHIPAGI) the chain is on the cytoplasmic side. Cys336 is lipidated: S-palmitoyl cysteine.

It belongs to the G-protein coupled receptor 1 family. As to expression, expressed in hippocampus, striatum, hypothalamus, cerebellum, small intestine, colon and adrenal gland.

The protein localises to the cell membrane. Its function is as follows. Receptor for neuropeptide Y and peptide YY. The activity of this receptor is mediated by G proteins that inhibit adenylate cyclase activity. The chain is Neuropeptide Y receptor type 6 (NPY6R) from Oryctolagus cuniculus (Rabbit).